A 465-amino-acid polypeptide reads, in one-letter code: GTPase Der (465 aa).

EngA-type G domains are found at residues 3–166 (FLVA…LNEY) and 184–358 (IHFS…ACAN). GTP contacts are provided by residues 9 to 16 (GRANVGKS), 56 to 60 (DTGGI), 118 to 121 (NKVD), 190 to 197 (GRPNVGKS), 237 to 241 (DTAGV), and 302 to 305 (NKWD). One can recognise a KH-like domain in the interval 359–443 (KKITTADATC…PIVFEFKQSE (85 aa)). The segment at 446–465 (FADRKNKRSKDEGSKSKKVK) is disordered.

It belongs to the TRAFAC class TrmE-Era-EngA-EngB-Septin-like GTPase superfamily. EngA (Der) GTPase family. As to quaternary structure, associates with the 50S ribosomal subunit.

In terms of biological role, GTPase that plays an essential role in the late steps of ribosome biogenesis. The chain is GTPase Der from Francisella tularensis subsp. mediasiatica (strain FSC147).